A 295-amino-acid polypeptide reads, in one-letter code: Mycothiol acetyltransferase (295 aa).

Glu30 contributes to the 1D-myo-inositol 2-(L-cysteinylamino)-2-deoxy-alpha-D-glucopyranoside binding site. 62-64 is a binding site for acetyl-CoA; the sequence is LVV. An N-acetyltransferase domain is found at 137 to 295; it reads VTVRAFRADS…DDDTHVQYRR (159 aa). Residues Glu165, Lys209, and Glu227 each coordinate 1D-myo-inositol 2-(L-cysteinylamino)-2-deoxy-alpha-D-glucopyranoside. Acetyl-CoA contacts are provided by residues 231 to 233 and 238 to 244; these read VGI and QGRGLGK. Tyr265 is a binding site for 1D-myo-inositol 2-(L-cysteinylamino)-2-deoxy-alpha-D-glucopyranoside.

It belongs to the acetyltransferase family. MshD subfamily. As to quaternary structure, monomer.

The enzyme catalyses 1D-myo-inositol 2-(L-cysteinylamino)-2-deoxy-alpha-D-glucopyranoside + acetyl-CoA = mycothiol + CoA + H(+). Its function is as follows. Catalyzes the transfer of acetyl from acetyl-CoA to desacetylmycothiol (Cys-GlcN-Ins) to form mycothiol. The polypeptide is Mycothiol acetyltransferase (Nocardioides sp. (strain ATCC BAA-499 / JS614)).